Here is an 848-residue protein sequence, read N- to C-terminus: Protein translocase subunit SecA (848 aa).

Residues Gln-86, 104–108 (GEGKT), and Asp-508 contribute to the ATP site. Positions 833, 835, 844, and 845 each coordinate Zn(2+).

This sequence belongs to the SecA family. In terms of assembly, monomer and homodimer. Part of the essential Sec protein translocation apparatus which comprises SecA, SecYEG and auxiliary proteins SecDF. Other proteins may also be involved. Requires Zn(2+) as cofactor.

The protein resides in the cell membrane. It is found in the cytoplasm. It carries out the reaction ATP + H2O + cellular proteinSide 1 = ADP + phosphate + cellular proteinSide 2.. In terms of biological role, part of the Sec protein translocase complex. Interacts with the SecYEG preprotein conducting channel. Has a central role in coupling the hydrolysis of ATP to the transfer of proteins into and across the cell membrane, serving as an ATP-driven molecular motor driving the stepwise translocation of polypeptide chains across the membrane. The polypeptide is Protein translocase subunit SecA (Caldicellulosiruptor saccharolyticus (strain ATCC 43494 / DSM 8903 / Tp8T 6331)).